The following is a 637-amino-acid chain: 3D-(3,5/4)-trihydroxycyclohexane-1,2-dione hydrolase (637 aa).

Residue Glu-66 participates in thiamine diphosphate binding. A thiamine pyrophosphate binding region spans residues 442–522 (SLPGDLQRLW…INILLFDNAG (81 aa)). The Mg(2+) site is built by Asp-493 and Asn-520.

Belongs to the TPP enzyme family. Mg(2+) is required as a cofactor. Requires thiamine diphosphate as cofactor.

The catalysed reaction is 3D-3,5/4-trihydroxycyclohexane-1,2-dione + H2O = 5-deoxy-D-glucuronate + H(+). The protein operates within polyol metabolism; myo-inositol degradation into acetyl-CoA; acetyl-CoA from myo-inositol: step 3/7. Involved in the cleavage of the C1-C2 bond of 3D-(3,5/4)-trihydroxycyclohexane-1,2-dione (THcHDO) to yield 5-deoxy-glucuronate (5DG). In Shouchella clausii (strain KSM-K16) (Alkalihalobacillus clausii), this protein is 3D-(3,5/4)-trihydroxycyclohexane-1,2-dione hydrolase.